A 214-amino-acid polypeptide reads, in one-letter code: Glutathione S-transferase F12 (214 aa).

In terms of domain architecture, GST N-terminal spans 2 to 82 (VVKLYGQVTA…YYATKFADQG (81 aa)). Residues 11–12 (AA), 40–41 (QK), 53–54 (QV), and 66–67 (ES) each bind glutathione. Residues 89-214 (SLEHRAIVDQ…WKKLMVLAGH (126 aa)) enclose the GST C-terminal domain.

Belongs to the GST superfamily. Phi family.

It localises to the cytoplasm. It is found in the cytosol. The enzyme catalyses RX + glutathione = an S-substituted glutathione + a halide anion + H(+). Its function is as follows. Involved in the transport and/or accumulation of both anthocyanins and proanthocyanidins (PA)s in the vacuole. Functions in the cytosol to maintain the regular accumulation in the vacuole of PA precursors, such as epicatechin and glycosylated epicatechin. This chain is Glutathione S-transferase F12, found in Arabidopsis thaliana (Mouse-ear cress).